Here is a 511-residue protein sequence, read N- to C-terminus: 2,3-bisphosphoglycerate-independent phosphoglycerate mutase (511 aa).

D12 lines the Mn(2+) pocket. Y36 bears the Phosphotyrosine mark. A Mn(2+)-binding site is contributed by S62. The active-site Phosphoserine intermediate is the S62. Substrate is bound by residues H123, 153–154 (RD), R185, R191, 261–264 (RPDR), and K336. Mn(2+) is bound by residues D403, H407, D444, H445, and H462.

This sequence belongs to the BPG-independent phosphoglycerate mutase family. Monomer. The cofactor is Mn(2+).

It carries out the reaction (2R)-2-phosphoglycerate = (2R)-3-phosphoglycerate. Its pathway is carbohydrate degradation; glycolysis; pyruvate from D-glyceraldehyde 3-phosphate: step 3/5. In terms of biological role, essential for rapid growth and for sporulation. Catalyzes the interconversion of 2-phosphoglycerate and 3-phosphoglycerate. The sequence is that of 2,3-bisphosphoglycerate-independent phosphoglycerate mutase from Bacillus licheniformis (strain ATCC 14580 / DSM 13 / JCM 2505 / CCUG 7422 / NBRC 12200 / NCIMB 9375 / NCTC 10341 / NRRL NRS-1264 / Gibson 46).